Here is a 201-residue protein sequence, read N- to C-terminus: FMN-dependent NADH:quinone oxidoreductase (201 aa).

Residues S10, 16 to 18 (SQS), 96 to 99 (MYNF), and 140 to 143 (SRGG) contribute to the FMN site.

The protein belongs to the azoreductase type 1 family. In terms of assembly, homodimer. FMN serves as cofactor.

The enzyme catalyses 2 a quinone + NADH + H(+) = 2 a 1,4-benzosemiquinone + NAD(+). The catalysed reaction is N,N-dimethyl-1,4-phenylenediamine + anthranilate + 2 NAD(+) = 2-(4-dimethylaminophenyl)diazenylbenzoate + 2 NADH + 2 H(+). Its function is as follows. Quinone reductase that provides resistance to thiol-specific stress caused by electrophilic quinones. In terms of biological role, also exhibits azoreductase activity. Catalyzes the reductive cleavage of the azo bond in aromatic azo compounds to the corresponding amines. The polypeptide is FMN-dependent NADH:quinone oxidoreductase (Citrobacter koseri (strain ATCC BAA-895 / CDC 4225-83 / SGSC4696)).